The primary structure comprises 406 residues: S-adenosylmethionine synthase (406 aa).

141–146 (GQGSMD) provides a ligand contact to ATP.

It belongs to the AdoMet synthase 2 family. Homodimer. The cofactor is Mg(2+).

It catalyses the reaction L-methionine + ATP + H2O = S-adenosyl-L-methionine + phosphate + diphosphate. The protein operates within amino-acid biosynthesis; S-adenosyl-L-methionine biosynthesis; S-adenosyl-L-methionine from L-methionine: step 1/1. Functionally, catalyzes the formation of S-adenosylmethionine from methionine and ATP. This is S-adenosylmethionine synthase (mat) from Methanocaldococcus jannaschii (strain ATCC 43067 / DSM 2661 / JAL-1 / JCM 10045 / NBRC 100440) (Methanococcus jannaschii).